Here is a 304-residue protein sequence, read N- to C-terminus: Glutaminase (304 aa).

Ser63, Asn114, Glu158, Asn165, Tyr189, Tyr240, and Val258 together coordinate substrate.

Belongs to the glutaminase family. In terms of assembly, homotetramer.

The enzyme catalyses L-glutamine + H2O = L-glutamate + NH4(+). The chain is Glutaminase from Shewanella putrefaciens (strain CN-32 / ATCC BAA-453).